Consider the following 294-residue polypeptide: Release factor glutamine methyltransferase (294 aa).

S-adenosyl-L-methionine contacts are provided by residues 131 to 135 (GTGSG), Asp154, and Asn202. Position 202 to 205 (202 to 205 (NPPY)) interacts with substrate.

Belongs to the protein N5-glutamine methyltransferase family. PrmC subfamily.

The enzyme catalyses L-glutaminyl-[peptide chain release factor] + S-adenosyl-L-methionine = N(5)-methyl-L-glutaminyl-[peptide chain release factor] + S-adenosyl-L-homocysteine + H(+). Methylates the class 1 translation termination release factors RF1/PrfA and RF2/PrfB on the glutamine residue of the universally conserved GGQ motif. The protein is Release factor glutamine methyltransferase of Chlorobaculum tepidum (strain ATCC 49652 / DSM 12025 / NBRC 103806 / TLS) (Chlorobium tepidum).